Consider the following 87-residue polypeptide: Ribonuclease P protein component 1 (87 aa).

This sequence belongs to the eukaryotic/archaeal RNase P protein component 1 family. As to quaternary structure, consists of a catalytic RNA component and at least 4-5 protein subunits.

It is found in the cytoplasm. It catalyses the reaction Endonucleolytic cleavage of RNA, removing 5'-extranucleotides from tRNA precursor.. Its function is as follows. Part of ribonuclease P, a protein complex that generates mature tRNA molecules by cleaving their 5'-ends. The polypeptide is Ribonuclease P protein component 1 (Thermoplasma acidophilum (strain ATCC 25905 / DSM 1728 / JCM 9062 / NBRC 15155 / AMRC-C165)).